The following is a 428-amino-acid chain: Enolase (428 aa).

A (2R)-2-phosphoglycerate-binding site is contributed by glutamine 165. Glutamate 207 acts as the Proton donor in catalysis. Positions 244, 285, and 312 each coordinate Mg(2+). The (2R)-2-phosphoglycerate site is built by lysine 337, arginine 366, serine 367, and lysine 388. Lysine 337 (proton acceptor) is an active-site residue.

It belongs to the enolase family. Component of the RNA degradosome, a multiprotein complex involved in RNA processing and mRNA degradation. It depends on Mg(2+) as a cofactor.

It localises to the cytoplasm. Its subcellular location is the secreted. It is found in the cell surface. The enzyme catalyses (2R)-2-phosphoglycerate = phosphoenolpyruvate + H2O. It participates in carbohydrate degradation; glycolysis; pyruvate from D-glyceraldehyde 3-phosphate: step 4/5. Its function is as follows. Catalyzes the reversible conversion of 2-phosphoglycerate (2-PG) into phosphoenolpyruvate (PEP). It is essential for the degradation of carbohydrates via glycolysis. The polypeptide is Enolase (Coxiella burnetii (strain Dugway 5J108-111)).